The chain runs to 650 residues: Growth hormone receptor (650 aa).

The first 24 residues, 1–24, serve as a signal peptide directing secretion; that stretch reads MDLCQVFLTLALAVTSSTFSGSEA. Over 25-273 the chain is Extracellular; that stretch reads TPATLGKASP…ILEACEEDIQ (249 aa). 2 disulfides stabilise this stretch: cysteine 56-cysteine 66 and cysteine 109-cysteine 120. N-linked (GlcNAc...) asparagine glycosylation is present at asparagine 123. A disulfide bond links cysteine 134 and cysteine 148. One can recognise a Fibronectin type-III domain in the interval 159–262; the sequence is PPIGLNWTLL…EVLRVIFPQT (104 aa). N-linked (GlcNAc...) asparagine glycosylation is found at asparagine 164, asparagine 169, and asparagine 208. The WSXWS motif motif lies at 248 to 252; the sequence is YSEFS. The chain crosses the membrane as a helical span at residues 274–297; the sequence is FPWFLIIIFGIFGVAVMLFVVIFS. Residues 298–650 lie on the Cytoplasmic side of the membrane; sequence KQQRIKMLIL…STDQLNKIMQ (353 aa). Residues 303–390 form a required for JAK2 binding region; sequence KMLILPPVPV…HEKSAGILGA (88 aa). Positions 306 to 314 match the Box 1 motif motif; sequence ILPPVPVPK. Positions 349 to 358 match the UbE motif motif; that stretch reads DSWVEFIELD. Serine 350 is subject to Phosphoserine. The disordered stretch occupies residues 466–486; that stretch reads KPQPLLSSETEATHQLASTPM. Polar residues predominate over residues 470–486; the sequence is LLSSETEATHQLASTPM. Tyrosine 498 and tyrosine 606 each carry phosphotyrosine.

Belongs to the type I cytokine receptor family. Type 1 subfamily. As to quaternary structure, on growth hormone (GH) binding, forms homodimers and binds JAK2 via a box 1-containing domain. In terms of processing, the soluble form (GHBP) is produced by phorbol ester-promoted proteolytic cleavage at the cell surface (shedding) by ADAM17/TACE. Shedding is inhibited by growth hormone (GH) binding to the receptor probably due to a conformational change in GHR rendering the receptor inaccessible to ADAM17. Post-translationally, on GH binding, phosphorylated on tyrosine residues in the cytoplasmic domain by JAK2. Ubiquitinated by the ECS(SOCS2) complex following ligand-binding and phosphorylation by JAK2, leading to its degradation by the proteasome. Regulation by the ECS(SOCS2) complex acts as a negative feedback loop of growth hormone receptor signaling. Ubiquitination is not sufficient for GHR internalization. Expressed in all tissues tested including, liver, heart, adipose tissue, mammary gland, testes, ovary, brain, kidney and muscle. Highest levels in liver.

It is found in the cell membrane. The protein localises to the secreted. Its function is as follows. Receptor for pituitary gland growth hormone (GH1) involved in regulating postnatal body growth. On ligand binding, couples to the JAK2/STAT5 pathway. The soluble form (GHBP) acts as a reservoir of growth hormone in plasma and may be a modulator/inhibitor of GH signaling. The protein is Growth hormone receptor (Ghr) of Mus musculus (Mouse).